The following is a 497-amino-acid chain: 3-octaprenyl-4-hydroxybenzoate carboxy-lyase (497 aa).

Position 175 (Asn175) interacts with Mn(2+). Prenylated FMN is bound by residues 178 to 180 (IYR), 192 to 194 (RWL), and 197 to 198 (RG). A Mn(2+)-binding site is contributed by Glu241. Asp290 serves as the catalytic Proton donor.

This sequence belongs to the UbiD family. In terms of assembly, homohexamer. Requires prenylated FMN as cofactor. It depends on Mn(2+) as a cofactor.

It localises to the cell membrane. The enzyme catalyses a 4-hydroxy-3-(all-trans-polyprenyl)benzoate + H(+) = a 2-(all-trans-polyprenyl)phenol + CO2. The protein operates within cofactor biosynthesis; ubiquinone biosynthesis. Functionally, catalyzes the decarboxylation of 3-octaprenyl-4-hydroxy benzoate to 2-octaprenylphenol, an intermediate step in ubiquinone biosynthesis. The chain is 3-octaprenyl-4-hydroxybenzoate carboxy-lyase from Shigella flexneri.